Reading from the N-terminus, the 555-residue chain is Oligo-1,6-glucosidase (555 aa).

Residue Asp-199 is the Nucleophile of the active site. The active-site Proton donor is the Glu-255.

The protein belongs to the glycosyl hydrolase 13 family.

The protein resides in the cytoplasm. The catalysed reaction is Hydrolysis of (1-&gt;6)-alpha-D-glucosidic linkages in some oligosaccharides produced from starch and glycogen by alpha-amylase, and in isomaltose.. This is Oligo-1,6-glucosidase (malL) from Heyndrickxia coagulans (Weizmannia coagulans).